Consider the following 427-residue polypeptide: 3-phosphoshikimate 1-carboxyvinyltransferase (427 aa).

Residues Lys22, Ser23, and Arg27 each coordinate 3-phosphoshikimate. Phosphoenolpyruvate is bound at residue Lys22. Residues Gly97 and Arg125 each contribute to the phosphoenolpyruvate site. 3-phosphoshikimate contacts are provided by Ser171, Ser172, Gln173, Ser199, Asp315, Asn338, and Lys342. Gln173 is a binding site for phosphoenolpyruvate. Asp315 serves as the catalytic Proton acceptor. Phosphoenolpyruvate is bound by residues Arg346, Arg388, and Lys413.

The protein belongs to the EPSP synthase family. Monomer.

It localises to the cytoplasm. The enzyme catalyses 3-phosphoshikimate + phosphoenolpyruvate = 5-O-(1-carboxyvinyl)-3-phosphoshikimate + phosphate. It functions in the pathway metabolic intermediate biosynthesis; chorismate biosynthesis; chorismate from D-erythrose 4-phosphate and phosphoenolpyruvate: step 6/7. Catalyzes the transfer of the enolpyruvyl moiety of phosphoenolpyruvate (PEP) to the 5-hydroxyl of shikimate-3-phosphate (S3P) to produce enolpyruvyl shikimate-3-phosphate and inorganic phosphate. The sequence is that of 3-phosphoshikimate 1-carboxyvinyltransferase from Aliivibrio salmonicida (strain LFI1238) (Vibrio salmonicida (strain LFI1238)).